A 241-amino-acid chain; its full sequence is Transcriptional regulatory protein SrrA (241 aa).

Positions 4–117 (EILIVDDEDR…EVVLRVKALL (114 aa)) constitute a Response regulatory domain. Position 53 is a 4-aspartylphosphate (Asp53). The ompR/PhoB-type DNA-binding region spans 133–233 (RDVIEFKHLE…VWGVGYKFEV (101 aa)).

Post-translationally, phosphorylated by SrrB.

The protein localises to the cytoplasm. Member of the two-component regulatory system SrrA/SrrB, which is involved in the global regulation of staphylococcal virulence factors in response to environmental oxygen levels as well as biofilm formation. Also plays an essential role in host-derived nitric oxide resistance by regulating hmp/flavohemoglobin, an enzyme that detoxifies nitric oxide by converting it to nitrate. Functions as a transcription regulator by direct binding to promoter regions of target genes. The polypeptide is Transcriptional regulatory protein SrrA (srrA) (Staphylococcus aureus (strain NCTC 8325 / PS 47)).